The chain runs to 166 residues: Lithostathine-1-alpha (166 aa).

The signal sequence occupies residues 1 to 22 (MAQTSSYFMLISCLMFLSQSQG). Gln23 is modified (pyrrolidone carboxylic acid). The O-linked (GalNAc) threonine glycan is linked to Thr27. Residues 34–164 (ISCPEGTNAY…EDKFSFVCKF (131 aa)) enclose the C-type lectin domain. Disulfide bonds link Cys36/Cys47, Cys64/Cys162, and Cys137/Cys154.

Post-translationally, the composition of the O-linked carbohydrate on Thr-27 is complex and varied. In the crystallographic structure, the attached sugar appears to be N-acetylglucosamine, typical of an intracellular protein, rather than N-acetylgalactosamine. In terms of tissue distribution, in pancreatic acinar cells and, in lower levels, in brain. Enhanced expression of PSP-related transcripts and intraneuronal accumulation of PSP-like proteins is found in brain from Alzheimer disease and Down syndrome patients.

It localises to the secreted. In terms of biological role, might act as an inhibitor of spontaneous calcium carbonate precipitation. May be associated with neuronal sprouting in brain, and with brain and pancreas regeneration. The sequence is that of Lithostathine-1-alpha (REG1A) from Homo sapiens (Human).